We begin with the raw amino-acid sequence, 369 residues long: Cyanuric acid amidohydrolase (369 aa).

The tract at residues 1 to 100 is RU A; it reads MPRRAEILRL…HWLVIAAREA (100 aa). Substrate-binding positions include Arg53 and 81–82; that span reads SG. The RU B stretch occupies residues 106-242; that stretch reads ALAVGQARTP…HEVVVMGMSP (137 aa). Lys155 is an active-site residue. Substrate-binding positions include Arg187 and 225–226; that span reads SA. The Nucleophile role is filled by Ser225. An RU C region spans residues 248-369; sequence LVIDHAVMAD…ARRSGAAGPA (122 aa). Position 296 (Glu296) interacts with Mg(2+). Substrate is bound by residues Arg323 and 342–343; that span reads SG. Mg(2+) is bound by residues Ala345, Gln348, Gly349, Pro350, and Gly353.

Belongs to the cyclic amide hydrolase (CyAH) family. In terms of assembly, homotetramer.

The enzyme catalyses cyanurate + H2O = 1-carboxybiuret + H(+). Its pathway is xenobiotic degradation; atrazine degradation; biuret from cyanurate: step 1/1. Its activity is regulated as follows. Inhibited by barbituric acid. Functionally, responsible for the hydrolysis of cyanuric acid, an intermediate formed during catabolism of s-triazine based compounds in herbicides such as atrazine and polymers such as melamine. Catalyzes the hydrolytic opening of the s-triazine ring of cyanuric acid (2,4,6-trihydroxy-s-triazine) to yield carbon dioxide and carboxybiuret, which spontaneously decarboxylates to biuret. The protein is Cyanuric acid amidohydrolase of Methylobacterium sp. (strain 4-46).